The sequence spans 211 residues: Small ribosomal subunit protein uS3 (211 aa).

A KH type-2 domain is found at 38–106; sequence LRSFVKKTFH…DVELHIVEVK (69 aa).

Belongs to the universal ribosomal protein uS3 family. As to quaternary structure, part of the 30S ribosomal subunit. Forms a tight complex with proteins S10 and S14.

In terms of biological role, binds the lower part of the 30S subunit head. Binds mRNA in the 70S ribosome, positioning it for translation. This Anaplasma marginale (strain Florida) protein is Small ribosomal subunit protein uS3.